Here is a 44-residue protein sequence, read N- to C-terminus: U4-ctenitoxin-Pk1a (44 aa).

5 disulfide bridges follow: C4–C18, C11–C24, C15–C42, C17–C33, and C26–C31.

In terms of tissue distribution, expressed by the venom gland.

It is found in the secreted. Neurotoxin. Causes spastic paralysis and death in mice within 10 minutes at dose levels of 3 ug per mouse. This chain is U4-ctenitoxin-Pk1a, found in Phoneutria keyserlingi (Brazilian wandering spider).